A 1212-amino-acid chain; its full sequence is Histone demethylase UTY (1212 aa).

TPR repeat units lie at residues 88-121 (SDFF…QTDY), 125-158 (AAFL…DPNF), 165-193 (HLRL…IDCN), 200-233 (VEIQ…ESLP), 245-278 (GWMH…DPNS), 279-312 (GQSW…SEAS), 313-346 (ADTW…DHGH), and 347-380 (AAAW…KSCN). Basic and acidic residues predominate over residues 530–539 (FTKESKDSRS). The interval 530–555 (FTKESKDSRSKSLTSKTSRKDRDTSN) is disordered. Thr752 carries the phosphothreonine modification. The disordered stretch occupies residues 865 to 886 (RRTQVKDYSDNESTCSDNSGRR). The 164-residue stretch at 907–1070 (KWKLQLHELT…YKLAVERYEW (164 aa)) folds into the JmjC domain. Residues His958, Glu960, and His1038 each coordinate Fe cation. 4 residues coordinate Zn(2+): Cys1143, Cys1146, Cys1170, and Cys1173.

Belongs to the UTX family. Binds TLE1 and TLE2. It depends on L-ascorbate as a cofactor. Fe(2+) serves as cofactor.

Its subcellular location is the nucleus. The catalysed reaction is N(6),N(6),N(6)-trimethyl-L-lysyl(27)-[histone H3] + 2 2-oxoglutarate + 2 O2 = N(6)-methyl-L-lysyl(27)-[histone H3] + 2 formaldehyde + 2 succinate + 2 CO2. Functionally, male-specific histone demethylase that catalyzes trimethylated 'Lys-27' (H3K27me3) demethylation in histone H3. Has relatively low KDM activity. The protein is Histone demethylase UTY (Uty) of Mus musculus (Mouse).